Consider the following 1310-residue polypeptide: Rho family-interacting cell polarization regulator 2 (1310 aa).

Phosphoserine is present on residues Ser-123 and Ser-178. The segment at 196-254 (MHNLGHKNTNTPKEPQPKRVEEVYRALKNGLDEYLEFHQTELDKLTAQLKDMKRNSRLG) is involved in cell filopodia formation. Residues 224 to 253 (NGLDEYLEFHQTELDKLTAQLKDMKRNSRL) are a coiled coil. Ser-508 bears the Phosphoserine mark. Residues 588–608 (SSLSSQNEGTEDSSSASSRNS) show a composition bias toward polar residues. Residues 588-639 (SSLSSQNEGTEDSSSASSRNSLGEDHEPKSHSKSDTVEPKKPSVDARSGTES) form a disordered region. Positions 609–631 (LGEDHEPKSHSKSDTVEPKKPSV) are enriched in basic and acidic residues. Ser-682 carries the post-translational modification Phosphoserine.

It belongs to the RIPOR family. As to quaternary structure, homooligomer; homooligomerization is regulated by RHOC and leads to the formation of concatemers through the association of N- and C-termini. Interacts (phosphorylated form) with 14-3-3 proteins; these interactions occur during myogenic cell differentiation and also induces T cell proliferation arrest. Interacts (phosphorylated form) with HDAC6; this interaction occurs during early myogenic differentiation, prevents HDAC6 to deacetylate tubulin and also induces T cell proliferation arrest. Interacts with DYSF; this interaction occurs during early myogenic differentiation. Interacts with MYOF. Interacts (via active GTP- or inactive GDP-bound forms) with RHOA; this interaction is direct, blocks the loading of GTP to RHOA and decreases upon chemokine CCL19 stimulation in primary T lymphocytes. Interacts with RHOC. Interacts (via phosphorylated form) with YWHAB; this interaction occurs in a chemokine-dependent manner and does not compete for binding of RIPOR2 with RHOA nor blocks inhibition of RIPOR2-mediated RHOA activity. Interacts with YWHAE. Interacts with YWHAQ. Post-translationally, phosphorylated. Chemokine-induced phosphorylation in neutrophils occurs in a PKC- and AKT-dependent manner, resulting in RIPOR2 interaction with YWHAB and stabilization. Phosphorylated by PKCA, AKT1 and MAPKAPK1A; in vitro. In terms of tissue distribution, expressed in the cochlea (at protein level).

The protein localises to the cytoplasm. The protein resides in the cytoskeleton. It is found in the cell projection. It localises to the filopodium. Its subcellular location is the apical cell membrane. The protein localises to the stereocilium. The protein resides in the stereocilium membrane. Acts as an inhibitor of the small GTPase RHOA and plays several roles in the regulation of myoblast and hair cell differentiation, lymphocyte T proliferation and neutrophil polarization. Plays a role in fetal mononuclear myoblast differentiation by promoting filopodia and myotube formation. Maintains naive T lymphocytes in a quiescent state and prevents chemokine-induced T lymphocyte responses, such as cell adhesion, polarization and migration. Involved also in the regulation of neutrophil polarization, chemotaxis and adhesion. Required for normal development of inner and outer hair cell stereocilia within the cochlea of the inner ear. Plays a role for maintaining the structural organization of the basal domain of stereocilia. Involved in mechanosensory hair cell function. Required for normal hearing. This chain is Rho family-interacting cell polarization regulator 2, found in Rattus norvegicus (Rat).